The chain runs to 553 residues: Hydroxylamine reductase (553 aa).

Cys-3, Cys-6, Cys-15, and Cys-21 together coordinate [4Fe-4S] cluster. Hybrid [4Fe-2O-2S] cluster-binding residues include His-244, Glu-268, Cys-312, Cys-406, Cys-434, Cys-459, Glu-494, and Lys-496. Cys-406 is subject to Cysteine persulfide.

This sequence belongs to the HCP family. In terms of assembly, monomer. [4Fe-4S] cluster serves as cofactor. Requires hybrid [4Fe-2O-2S] cluster as cofactor.

It is found in the cytoplasm. The catalysed reaction is A + NH4(+) + H2O = hydroxylamine + AH2 + H(+). Catalyzes the reduction of hydroxylamine to form NH(3) and H(2)O. In Nitratidesulfovibrio vulgaris (strain ATCC 29579 / DSM 644 / CCUG 34227 / NCIMB 8303 / VKM B-1760 / Hildenborough) (Desulfovibrio vulgaris), this protein is Hydroxylamine reductase.